Consider the following 253-residue polypeptide: Indole-3-glycerol phosphate synthase (253 aa).

Belongs to the TrpC family.

The catalysed reaction is 1-(2-carboxyphenylamino)-1-deoxy-D-ribulose 5-phosphate + H(+) = (1S,2R)-1-C-(indol-3-yl)glycerol 3-phosphate + CO2 + H2O. Its pathway is amino-acid biosynthesis; L-tryptophan biosynthesis; L-tryptophan from chorismate: step 4/5. The polypeptide is Indole-3-glycerol phosphate synthase (Bacillus thuringiensis (strain Al Hakam)).